Consider the following 89-residue polypeptide: Large ribosomal subunit protein bL27 (89 aa).

Positions 1–22 (MAHKKGTGSTRNGRDSNAQRLG) are disordered. The segment covering 7 to 19 (TGSTRNGRDSNAQ) has biased composition (polar residues).

It belongs to the bacterial ribosomal protein bL27 family.

The chain is Large ribosomal subunit protein bL27 from Cyanothece sp. (strain PCC 7425 / ATCC 29141).